The chain runs to 418 residues: MDIYDCILEKAKNANRAARTLSNMSTDIKNAALIKMAEELNKNKDDILKANMLDLEDAKSSGKNDAFIDRLTLNENRIESMASGLMKVASLPDPIGEVTRMWKKSNELNIGRVRVPLGTIGIIYEARPNVTVDAAALCVKSGNSVILKGGKEAINSNLAIYNAINKGAIEAGLPAGTIEFINMTERKAVEVLMKLNEYVDVLIPRGGSGLIKSVVENSTVPVIETGIGNCHVYVDSSADLTMAENIVINAKTQRPGVCNAMETLLVHEAVAEKLIPHLTETLSKMGVEIRGCLKTKRLIPDIRLATAEDYAQEFLDLILAVKVVSSLDEALDHIYKYGTKHSEAIITNDYTSSQRFLREVDAAAVYVNASTRFTDGEEFGFGAEIGISTQKLHARGPMGLNELTTIKYIVYGEGQIRE.

It belongs to the gamma-glutamyl phosphate reductase family.

It is found in the cytoplasm. The catalysed reaction is L-glutamate 5-semialdehyde + phosphate + NADP(+) = L-glutamyl 5-phosphate + NADPH + H(+). It participates in amino-acid biosynthesis; L-proline biosynthesis; L-glutamate 5-semialdehyde from L-glutamate: step 2/2. Functionally, catalyzes the NADPH-dependent reduction of L-glutamate 5-phosphate into L-glutamate 5-semialdehyde and phosphate. The product spontaneously undergoes cyclization to form 1-pyrroline-5-carboxylate. The protein is Gamma-glutamyl phosphate reductase of Clostridium kluyveri (strain NBRC 12016).